We begin with the raw amino-acid sequence, 201 residues long: CASP-like protein 2A1 (201 aa).

A disordered region spans residues 1-27 (MEKRDKGSSPMATMMGSRDENEDVENT). Topologically, residues 1–30 (MEKRDKGSSPMATMMGSRDENEDVENTTRT) are cytoplasmic. Residues 31 to 51 (AETMLRLVPMALCVSALVVML) form a helical membrane-spanning segment. Residues 52–72 (KNTQTNDYGSLSYSDLGAFRY) lie on the Extracellular side of the membrane. Residues 73-93 (LVHVNGICAGYSLLSAVIVAM) form a helical membrane-spanning segment. At 94–101 (PRASTMPR) the chain is on the cytoplasmic side. A helical membrane pass occupies residues 102-122 (AWAFFLLDQVLTYVILAAGTV). Residues 123 to 152 (STEVLYLASKGDTTITWSEACVSFGGFCHK) are Extracellular-facing. Residues 153 to 173 (ALISIVITFVVVICYAALSLL) traverse the membrane as a helical segment. Over 174 to 201 (SSYKLFSKYDSPVLTYPGKGIEIATFHG) the chain is Cytoplasmic.

It belongs to the Casparian strip membrane proteins (CASP) family. Homodimer and heterodimers.

The protein localises to the cell membrane. This is CASP-like protein 2A1 from Populus trichocarpa (Western balsam poplar).